The chain runs to 247 residues: Mast cell protease 2 (247 aa).

The signal sequence occupies residues 1–18 (MQALLFLMALLLPSGAGA). A propeptide spans 19-20 (EE) (activation peptide). Residues 21-244 (IIGGVESIPH…YVPWINAVIN (224 aa)) enclose the Peptidase S1 domain. A disulfide bridge connects residues C50 and C66. Active-site charge relay system residues include H65 and D109. 2 disulfide bridges follow: C143–C208 and C174–C187. The active-site Charge relay system is S202.

Belongs to the peptidase S1 family. Granzyme subfamily.

In terms of biological role, this enzyme, isolated from small intestine, specifically inactivates the apo forms of a certain group of intracellular pyridoxal phosphate-requiring enzymes. It has chymotrypsin-like specificity towards small substrates. The polypeptide is Mast cell protease 2 (Mcpt2) (Rattus norvegicus (Rat)).